The following is a 490-amino-acid chain: Glutamate--tRNA ligase (490 aa).

Residues 15-25 carry the 'HIGH' region motif; it reads PSPTGYLHVGG. The short motif at 259 to 263 is the 'KMSKS' region element; it reads KLSKR. Lys-262 provides a ligand contact to ATP.

This sequence belongs to the class-I aminoacyl-tRNA synthetase family. Glutamate--tRNA ligase type 1 subfamily. As to quaternary structure, monomer.

Its subcellular location is the cytoplasm. The enzyme catalyses tRNA(Glu) + L-glutamate + ATP = L-glutamyl-tRNA(Glu) + AMP + diphosphate. Catalyzes the attachment of glutamate to tRNA(Glu) in a two-step reaction: glutamate is first activated by ATP to form Glu-AMP and then transferred to the acceptor end of tRNA(Glu). In Bdellovibrio bacteriovorus (strain ATCC 15356 / DSM 50701 / NCIMB 9529 / HD100), this protein is Glutamate--tRNA ligase.